The sequence spans 202 residues: Imidazoleglycerol-phosphate dehydratase (202 aa).

It belongs to the imidazoleglycerol-phosphate dehydratase family.

It localises to the cytoplasm. The catalysed reaction is D-erythro-1-(imidazol-4-yl)glycerol 3-phosphate = 3-(imidazol-4-yl)-2-oxopropyl phosphate + H2O. Its pathway is amino-acid biosynthesis; L-histidine biosynthesis; L-histidine from 5-phospho-alpha-D-ribose 1-diphosphate: step 6/9. This is Imidazoleglycerol-phosphate dehydratase from Salinibacter ruber (strain DSM 13855 / M31).